The primary structure comprises 657 residues: Glycogen debranching enzyme (657 aa).

D336 serves as the catalytic Nucleophile. The active-site Proton donor is E371. The tract at residues 460–481 is disordered; it reads ANGEENRDGTNNNYSNNHGKEG.

It belongs to the glycosyl hydrolase 13 family.

The catalysed reaction is Hydrolysis of (1-&gt;6)-alpha-D-glucosidic linkages to branches with degrees of polymerization of three or four glucose residues in limit dextrin.. Its pathway is glycan degradation; glycogen degradation. Functionally, removes maltotriose and maltotetraose chains that are attached by 1,6-alpha-linkage to the limit dextrin main chain, generating a debranched limit dextrin. In Escherichia coli O157:H7, this protein is Glycogen debranching enzyme.